The following is a 712-amino-acid chain: Cyclolysin secretion/processing ATP-binding protein CyaB (712 aa).

One can recognise a Peptidase C39 domain in the interval 7-128; sequence QCASVPDSGL…ALWAGELLLC (122 aa). The ABC transmembrane type-1 domain occupies 157–439; the sequence is IGEVLLISLV…LAQLWNDFQQ (283 aa). Transmembrane regions (helical) follow at residues 160 to 180, 194 to 214, 272 to 292, 298 to 318, 367 to 387, and 390 to 410; these read VLLI…FFQV, LNVI…LTGI, AVTV…MFFY, LVVL…TPVL, VAAG…VTLI, and LVAL…RMTV. Residues 471 to 706 enclose the ABC transporter domain; the sequence is IELDRVSFRY…GGLYARLQAL (236 aa). 505–512 is a binding site for ATP; that stretch reads GRSGSGKS.

Belongs to the ABC transporter superfamily. Cyclolysin exporter (TC 3.A.1.109.2) family.

The protein resides in the cell membrane. Functionally, involved in the export of calmodulin-sensitive adenylate cyclase-hemolysin (cyclolysin). This Bordetella pertussis (strain ATCC 9797 / DSM 5571 / CCUG 30873 / LMG 14455 / NCTC 10739 / 18323) protein is Cyclolysin secretion/processing ATP-binding protein CyaB (cyaB).